Consider the following 975-residue polypeptide: Kinesin heavy chain (975 aa).

Residues 12–333 (SIKVVCRFRP…LDFGRRAKTV (322 aa)) form the Kinesin motor domain. 92–99 (GQTSSGKT) provides a ligand contact to ATP. The segment at 180 to 321 (VSSPEDVFEV…PASFNESETK (142 aa)) is microtubule-binding. Residues 335–931 (NVVCVNEELT…DRIKEAVRQK (597 aa)) adopt a coiled-coil conformation. Residues 810 to 891 (VAKELQTLHN…LPKLEKRLRC (82 aa)) are necessary for associating with milt. Residues 932-975 (HLGRRGPQAQIAKPIRSGQGAIAIRGGGAVGGPSPLAQVNPVNS) form a globular region.

This sequence belongs to the TRAFAC class myosin-kinesin ATPase superfamily. Kinesin family. Kinesin subfamily. Oligomer composed of two heavy chains and two light chains.

It is found in the cytoplasm. Its subcellular location is the cytoskeleton. Kinesin is a microtubule-associated force-producing protein that may play a role in organelle transport. Milt and Miro form an essential protein complex that links Khc to mitochondria for light chain-independent, anterograde transport of mitochondria. This Drosophila melanogaster (Fruit fly) protein is Kinesin heavy chain (Khc).